The chain runs to 320 residues: Mitochondrial thiamine pyrophosphate carrier (320 aa).

3 Solcar repeats span residues Asn-13–Leu-106, Arg-116–Leu-202, and Asn-214–Val-309. The helical transmembrane segment at Ala-19–Ile-39 threads the bilayer. The residue at position 51 (Ser-51) is a Phosphoserine. The next 4 helical transmembrane spans lie at Ile-87–Val-107, Phe-122–Leu-142, Val-173–Phe-193, and Leu-220–Phe-240. The Substrate recognition signature appears at Lys-241–Val-246. The helical transmembrane segment at Ala-293–Met-313 threads the bilayer.

The protein belongs to the mitochondrial carrier (TC 2.A.29) family.

The protein resides in the mitochondrion membrane. It carries out the reaction thiamine phosphate(out) + thiamine diphosphate(in) = thiamine phosphate(in) + thiamine diphosphate(out). Its function is as follows. Mitochondrial transporter mediating uptake of thiamine diphosphate into mitochondria. It is not clear if the antiporter activity is affected by the membrane potential or by the proton electrochemical gradient. In Pongo abelii (Sumatran orangutan), this protein is Mitochondrial thiamine pyrophosphate carrier (SLC25A19).